The sequence spans 82 residues: Exodeoxyribonuclease 7 small subunit (82 aa).

This sequence belongs to the XseB family. In terms of assembly, heterooligomer composed of large and small subunits.

The protein resides in the cytoplasm. The catalysed reaction is Exonucleolytic cleavage in either 5'- to 3'- or 3'- to 5'-direction to yield nucleoside 5'-phosphates.. Bidirectionally degrades single-stranded DNA into large acid-insoluble oligonucleotides, which are then degraded further into small acid-soluble oligonucleotides. In Colwellia psychrerythraea (strain 34H / ATCC BAA-681) (Vibrio psychroerythus), this protein is Exodeoxyribonuclease 7 small subunit.